Consider the following 437-residue polypeptide: Glutamate-1-semialdehyde 2,1-aminomutase (437 aa).

An N6-(pyridoxal phosphate)lysine modification is found at lysine 273.

The protein belongs to the class-III pyridoxal-phosphate-dependent aminotransferase family. HemL subfamily. In terms of assembly, homodimer. Requires pyridoxal 5'-phosphate as cofactor.

The protein localises to the cytoplasm. The catalysed reaction is (S)-4-amino-5-oxopentanoate = 5-aminolevulinate. It participates in porphyrin-containing compound metabolism; protoporphyrin-IX biosynthesis; 5-aminolevulinate from L-glutamyl-tRNA(Glu): step 2/2. The chain is Glutamate-1-semialdehyde 2,1-aminomutase from Chlamydia caviae (strain ATCC VR-813 / DSM 19441 / 03DC25 / GPIC) (Chlamydophila caviae).